The following is a 748-amino-acid chain: Photosystem I P700 chlorophyll a apoprotein A1 (748 aa).

The next 8 membrane-spanning stretches (helical) occupy residues 69–92 (IFSAHFGQLAIIFIWLSGMYFHGA), 155–178 (LYVTALGGLGMAGLMIFAGWFHYH), 194–218 (LNHHLAGLLGLGSLSWAGHQIHVSL), 290–308 (VAHHHLAIAVLFLVAGHMY), 345–368 (WHANLAINLAMLGSLSIIVAHHMY), 384–410 (LSLFTHHMWIGGFCIVGAGAHAAIYMV), 432–454 (AIISHLNWVCIFLGMHSFGLYIH), and 529–547 (FMVHHIHAFTIHVTTLILL). Cysteine 571 and cysteine 580 together coordinate [4Fe-4S] cluster. 2 helical membrane-spanning segments follow: residues 587-608 (HVFLGLFWMYNALSIVIFHFSW) and 662-684 (LSAYGLMFLGAHFVWAFSLMFLF). Histidine 673 is a chlorophyll a' binding site. Methionine 681 and tyrosine 689 together coordinate chlorophyll a. A phylloquinone-binding site is contributed by tryptophan 690. A helical membrane pass occupies residues 722-742 (AVGVAHYLLGGIATTWAFFLA).

The protein belongs to the PsaA/PsaB family. As to quaternary structure, the PsaA/B heterodimer binds the P700 chlorophyll special pair and subsequent electron acceptors. PSI consists of a core antenna complex that captures photons, and an electron transfer chain that converts photonic excitation into a charge separation. The eukaryotic PSI reaction center is composed of at least 11 subunits. P700 is a chlorophyll a/chlorophyll a' dimer, A0 is one or more chlorophyll a, A1 is one or both phylloquinones and FX is a shared 4Fe-4S iron-sulfur center. serves as cofactor.

The protein resides in the plastid. It localises to the chloroplast thylakoid membrane. The catalysed reaction is reduced [plastocyanin] + hnu + oxidized [2Fe-2S]-[ferredoxin] = oxidized [plastocyanin] + reduced [2Fe-2S]-[ferredoxin]. Its function is as follows. PsaA and PsaB bind P700, the primary electron donor of photosystem I (PSI), as well as the electron acceptors A0, A1 and FX. PSI is a plastocyanin/cytochrome c6-ferredoxin oxidoreductase, converting photonic excitation into a charge separation, which transfers an electron from the donor P700 chlorophyll pair to the spectroscopically characterized acceptors A0, A1, FX, FA and FB in turn. Oxidized P700 is reduced on the lumenal side of the thylakoid membrane by plastocyanin or cytochrome c6. This is Photosystem I P700 chlorophyll a apoprotein A1 from Cyanidioschyzon merolae (strain NIES-3377 / 10D) (Unicellular red alga).